We begin with the raw amino-acid sequence, 408 residues long: COP9 signalosome complex subunit 4 (408 aa).

Positions Arg194–Thr374 constitute a PCI domain.

This sequence belongs to the CSN4 family. As to quaternary structure, component of the COP9 signalosome (CSN) complex.

It localises to the cytoplasm. The protein resides in the nucleus. Component of the COP9 signalosome (CSN) complex that acts as an regulator of the ubiquitin (Ubl) conjugation pathway by mediating the deneddylation of the cullin subunit of SCF-type E3 ubiquitin-protein ligase complexes. The CSN complex seems to link protein degradation to sexual development. Required for fruit body formation. This is COP9 signalosome complex subunit 4 (csnD) from Emericella nidulans (strain FGSC A4 / ATCC 38163 / CBS 112.46 / NRRL 194 / M139) (Aspergillus nidulans).